The chain runs to 78 residues: UPF0154 protein lp_2061 (78 aa).

A helical transmembrane segment spans residues 5–27 (TGIWILIVVIGVLVGLTGGFFGA).

This sequence belongs to the UPF0154 family.

It is found in the membrane. The sequence is that of UPF0154 protein lp_2061 from Lactiplantibacillus plantarum (strain ATCC BAA-793 / NCIMB 8826 / WCFS1) (Lactobacillus plantarum).